A 438-amino-acid polypeptide reads, in one-letter code: Dol-P-Man:Man(5)GlcNAc(2)-PP-Dol alpha-1,3-mannosyltransferase (438 aa).

Ser-13 carries the phosphoserine modification. The next 11 helical transmembrane spans lie at Tyr-41–Ile-61, Thr-95–Thr-115, Met-123–Tyr-143, Val-149–Val-169, Leu-172–Gln-192, Leu-203–Leu-223, Ala-231–Leu-251, Phe-289–Trp-309, Pro-332–Phe-352, Leu-356–Pro-376, and Ala-407–Phe-427.

Belongs to the glycosyltransferase ALG3 family.

It is found in the endoplasmic reticulum membrane. It catalyses the reaction an alpha-D-Man-(1-&gt;2)-alpha-D-Man-(1-&gt;2)-alpha-D-Man-(1-&gt;3)-[alpha-D-Man-(1-&gt;6)]-beta-D-Man-(1-&gt;4)-beta-D-GlcNAc-(1-&gt;4)-alpha-D-GlcNAc-diphospho-di-trans,poly-cis-dolichol + a di-trans,poly-cis-dolichyl beta-D-mannosyl phosphate = an alpha-D-Man-(1-&gt;2)-alpha-D-Man-(1-&gt;2)-alpha-D-Man-(1-&gt;3)-[alpha-D-Man-(1-&gt;3)-alpha-D-Man-(1-&gt;6)]-beta-D-Man-(1-&gt;4)-beta-D-GlcNAc-(1-&gt;4)-alpha-D-GlcNAc-diphospho-di-trans,poly-cis-dolichol + a di-trans,poly-cis-dolichyl phosphate + H(+). The protein operates within protein modification; protein glycosylation. Functionally, dol-P-Man:Man(5)GlcNAc(2)-PP-Dol alpha-1,3-mannosyltransferase that operates in the biosynthetic pathway of dolichol-linked oligosaccharides, the glycan precursors employed in protein asparagine (N)-glycosylation. The assembly of dolichol-linked oligosaccharides begins on the cytosolic side of the endoplasmic reticulum membrane and finishes in its lumen. The sequential addition of sugars to dolichol pyrophosphate produces dolichol-linked oligosaccharides containing fourteen sugars, including two GlcNAcs, nine mannoses and three glucoses. Once assembled, the oligosaccharide is transferred from the lipid to nascent proteins by oligosaccharyltransferases. In the lumen of the endoplasmic reticulum, adds the first dolichyl beta-D-mannosyl phosphate derived mannose in an alpha-1,3 linkage to Man(5)GlcNAc(2)-PP-dolichol to produce Man(6)GlcNAc(2)-PP-dolichol. Man(6)GlcNAc(2)-PP-dolichol is a substrate for ALG9, the following enzyme in the biosynthetic pathway. The protein is Dol-P-Man:Man(5)GlcNAc(2)-PP-Dol alpha-1,3-mannosyltransferase of Homo sapiens (Human).